The chain runs to 205 residues: Urease accessory protein UreE (205 aa).

Residues 171-205 form a disordered region; sequence AHEAHPHAHSHAGGHGHVHSGHGHGGKHGEHDAES. Residues 177–196 are compositionally biased toward basic residues; sequence HAHSHAGGHGHVHSGHGHGG.

Belongs to the UreE family.

It is found in the cytoplasm. Functionally, involved in urease metallocenter assembly. Binds nickel. Probably functions as a nickel donor during metallocenter assembly. This Bordetella bronchiseptica (strain ATCC BAA-588 / NCTC 13252 / RB50) (Alcaligenes bronchisepticus) protein is Urease accessory protein UreE.